The primary structure comprises 642 residues: Chaperone protein DnaK (642 aa).

Phosphothreonine; by autocatalysis is present on Thr199. Residues 570 to 585 (EELEQASKDGDKEAID) are compositionally biased toward basic and acidic residues. A disordered region spans residues 570 to 642 (EELEQASKDG…FEEVKDDDKK (73 aa)). The segment covering 600–620 (EAAQQQQAQQGAEGAAGGEQQ) has biased composition (low complexity). The segment covering 627–642 (DVVDAEFEEVKDDDKK) has biased composition (acidic residues).

This sequence belongs to the heat shock protein 70 family.

Its function is as follows. Acts as a chaperone. In Idiomarina loihiensis (strain ATCC BAA-735 / DSM 15497 / L2-TR), this protein is Chaperone protein DnaK.